Here is a 485-residue protein sequence, read N- to C-terminus: MRLAGILLHVTSLPSPYGIGDLGKEAYRFLDFLKECGFSLWQVLPLNPTSLEAGNSPYSSNSLFAGNYVLIDPEELLEEDLIKERDLKRFPLGEALYEVVYEYKKELLEKAFKNFRRFELLEDFLKEHSYWLRDYALYMAIKEEEGKEWYEWDEELKRREKEALKRVLNKLKGRFYFHVFVQFVFFKQWEKLRRYARERGISIVGDLPMYPSYSSADVWTNPELFKLDGDLKPLFVAGVPPDFFSKTGQLWGNPVYNWEEHEKEGFRWWIRRVHHNLKLFDFLRLDHFRGFEAYWEVPYGEETAVNGRWVKAPGKTLFKKLLSYFPKNPFIAEDLGFITDEVRYLRETFKIPGSRVIEFAFYDKESEHLPHNVEENNVYYTSTHDLPPIRGWFENLGEESRKRLFEYLGREIKEEKVNEELIRLVLISRAKFAIIQMQDLLNLGNEARMNYPGRPFGNWRWRIKEDYTQKKEFIKKLLGIYGREV.

This sequence belongs to the disproportionating enzyme family.

It localises to the cytoplasm. The catalysed reaction is Transfers a segment of a (1-&gt;4)-alpha-D-glucan to a new position in an acceptor, which may be glucose or a (1-&gt;4)-alpha-D-glucan.. This Aquifex aeolicus (strain VF5) protein is 4-alpha-glucanotransferase (malQ).